The chain runs to 284 residues: Tropomyosin (284 aa).

Residues 1–284 adopt a coiled-coil conformation; the sequence is MDAIKKKMLA…DSTFAELAGY (284 aa). A disordered region spans residues 105-131; it reads RLQSATEKLEEASKAADESERGRKVLE.

It belongs to the tropomyosin family. As to quaternary structure, homodimer.

In terms of biological role, tropomyosin, in association with the troponin complex, plays a central role in the calcium dependent regulation of muscle contraction. This chain is Tropomyosin, found in Cornu aspersum (Brown garden snail).